The primary structure comprises 593 residues: Kelch-like protein 2 (593 aa).

Residues 1-29 are disordered; the sequence is MESPPLPPACTKQGHQKPLDSKDENPEKH. Positions 17–29 are enriched in basic and acidic residues; the sequence is KPLDSKDENPEKH. In terms of domain architecture, BTB spans 56-123; that stretch reads CDVTIVAEDM…VYTAEIQVTE (68 aa). Kelch repeat units lie at residues 308 to 353, 354 to 400, 402 to 447, 449 to 496, 497 to 543, and 545 to 591; these read LMVV…YMAG, LVFA…VLNG, LYAV…VVGG, LYAV…VLNN, LLYA…AVNG, and LYVV…VIDK.

In terms of assembly, component of the BCR(KLHL2) E3 ubiquitin ligase complex, at least composed of CUL3 and KLHL2 and RBX1. Binds actin. Interacts with KLHL12. Interacts (via N-terminus) with FYN (via SH3 domain). As to expression, detected in brain neurons, oligodendrocytes and astrocytes (at protein level).

It localises to the cytoplasm. It is found in the cytoskeleton. Its subcellular location is the cell projection. The protein resides in the ruffle. The protein localises to the lamellipodium. It localises to the cytosol. It functions in the pathway protein modification; protein ubiquitination. In terms of biological role, substrate-specific adapter of a BCR (BTB-CUL3-RBX1) E3 ubiquitin ligase complex that mediates the ubiquitination of target proteins, such as NPTXR, WNK1, WNK3 and WNK4, leading most often to their proteasomal degradation. The BCR(KLHL2) complex catalyzes ubiquitination and degradation of NPTXR. Responsible for degradative ubiquitination of the WNK kinases WNK1, WNK3 and WNK4. Plays a role in the reorganization of the actin cytoskeleton. Promotes growth of cell projections in oligodendrocyte precursors. This Rattus norvegicus (Rat) protein is Kelch-like protein 2.